A 350-amino-acid chain; its full sequence is UDP-rhamnose/UDP-galactose transporter 3 (350 aa).

10 consecutive transmembrane segments (helical) span residues 12–32, 41–61, 81–101, 104–124, 133–153, 160–180, 200–220, 224–244, 257–277, and 286–306; these read AVSDMGAWAMNVISSVGIIMA, GFAFSFATTLTGFHFALTALV, LIWFSIVANVSIAAMNFSLML, VGFYQISKLSMIPVVCVMEWI, EVKISVVVVVVGVGICTVTDV, FICACVAIFSSSLQQILIGSL, AFSLLVVGPLVDYLLSGKFIM, MSSGCFLFILLSCGLAVFCNI, SFQVIGHMKTVCILTLGWLLF, and VAGMIVAIVGMVIYSWAMELE.

It belongs to the TPT transporter family. TPT (TC 2.A.7.9) subfamily.

The protein localises to the golgi apparatus membrane. In terms of biological role, nucleotide-sugar transporter that transports UDP-rhamnose or UDP-galactose and UMP in a strict counter-exchange mode. The chain is UDP-rhamnose/UDP-galactose transporter 3 from Arabidopsis thaliana (Mouse-ear cress).